The chain runs to 1133 residues: Tudor domain-containing protein 1 (1133 aa).

Positions 1-55 (MNELRMPNLVRPNRPLREPASRPLTPSRFPVPSQPDAAYTGSAAGSTGLGSPGPA) are disordered. Positions 37–46 (AAYTGSAAGS) are enriched in low complexity. Zn(2+) is bound by residues Cys-75, Cys-78, Cys-86, Cys-89, Cys-95, Cys-99, His-107, and Cys-111. The segment at 75–111 (CHYCGQQGIFRCKGCKKTPYCSVDCQREDWKAHRHMC) adopts an MYND-type zinc-finger fold. Tudor domains are found at residues 204–264 (VPCV…TKPY), 435–494 (RPAP…LLAL), and 656–714 (VPKV…LLKL). Residues 786–836 (SGNLSKDPVRSPTTKQEDLRGGDQSQALTPASNDTQAVCEDGKSEEEPSEV) are disordered. Residues 808–821 (DQSQALTPASNDTQ) show a composition bias toward polar residues. The Tudor 4 domain maps to 904 to 962 (RPVPGAACCAQFSVDKIWYRAIILEVGEAEMSVVYADYGNSEKVPVSQILPIPTRLLQL). The interval 1036–1104 (KGSPLPDASQ…QATSVHDLQG (69 aa)) is disordered. Positions 1079 to 1088 (VTNTQESTPQ) are enriched in polar residues.

It belongs to the TDRD1 family. Interacts with MAEL. Interacts with PIWIL1, PIWIL2 and PIWIL4 (when methylated on arginine residues). Expressed in both the ovary and testis in the adult. Present in migrating primordial germ cells (PGCs) and also in the germ cells in both the gonadal primordia (stage 33), and in the developing ovary and testis.

Its subcellular location is the cytoplasm. Functionally, plays a central role during spermatogenesis by participating in the repression transposable elements and preventing their mobilization, which is essential for the germline integrity. Acts via the piRNA metabolic process, which mediates the repression of transposable elements during meiosis by forming complexes composed of piRNAs and Piwi proteins and governs the methylation and subsequent repression of transposons. Required for the localization of Piwi proteins to the meiotic nuage. Involved in the piRNA metabolic process by ensuring the entry of correct transcripts into the normal piRNA pool and limiting the entry of cellular transcripts into the piRNA pathway. May act by allowing the recruitment of piRNA biogenesis or loading factors that ensure the correct entry of transcripts and piRNAs into Piwi proteins. The chain is Tudor domain-containing protein 1 (tdrd1) from Oryzias latipes (Japanese rice fish).